The sequence spans 571 residues: Sulfite reductase [NADPH] hemoprotein beta-component (571 aa).

[4Fe-4S] cluster is bound by residues cysteine 436, cysteine 442, cysteine 481, and cysteine 485. Cysteine 485 lines the siroheme pocket.

Belongs to the nitrite and sulfite reductase 4Fe-4S domain family. In terms of assembly, alpha(8)-beta(8). The alpha component is a flavoprotein, the beta component is a hemoprotein. Requires siroheme as cofactor. [4Fe-4S] cluster serves as cofactor.

It carries out the reaction hydrogen sulfide + 3 NADP(+) + 3 H2O = sulfite + 3 NADPH + 4 H(+). The protein operates within sulfur metabolism; hydrogen sulfide biosynthesis; hydrogen sulfide from sulfite (NADPH route): step 1/1. Functionally, component of the sulfite reductase complex that catalyzes the 6-electron reduction of sulfite to sulfide. This is one of several activities required for the biosynthesis of L-cysteine from sulfate. This Bacillus subtilis (strain 168) protein is Sulfite reductase [NADPH] hemoprotein beta-component (cysI).